The chain runs to 567 residues: TNF receptor-associated factor 3 (567 aa).

The tract at residues 1–26 (MESSKKMDAAGTLQPNPPLKLQPDRG) is disordered. Residue cysteine 55 forms a Glycyl cysteine thioester (Cys-Gly) (interchain with G-Cter in ubiquitin) linkage. The segment at 67–76 (CGHRFCESCM) adopts an RING-type zinc-finger fold. Residue lysine 106 forms a Glycyl lysine isopeptide (Lys-Gly) (interchain with G-Cter in ubiquitin) linkage. A Glycyl cysteine thioester (Cys-Gly) (interchain with G-Cter in ubiquitin) cross-link involves residue cysteine 123. 2 TRAF-type zinc fingers span residues 134 to 189 (VHLK…IKLQ) and 190 to 248 (KHED…QQIK). Residues lysine 155 and lysine 167 each participate in a glycyl lysine isopeptide (Lys-Gly) (interchain with G-Cter in ubiquitin) cross-link. A coiled-coil region spans residues 266–337 (SNSLEKKVSL…KLKELDKEIR (72 aa)). A Glycyl lysine isopeptide (Lys-Gly) (interchain with G-Cter in ubiquitin) cross-link involves residue lysine 328. The region spanning 414–559 (NGVLIWKIRD…DDTIFIKVIV (146 aa)) is the MATH domain.

The protein belongs to the TNF receptor-associated factor family. A subfamily. As to quaternary structure, homotrimer. Heterotrimer with TRAF2 and TRAF5. Interacts with LTBR/TNFRSF3, TNFRSF4, TNFRSF5/CD40, TNFRSF8/CD30, TNFRSF13C TNFRSF17/BCMA, TLR4 and EDAR. Interacts with MAP3K5, MAP3K14, TRAIP/TRIP, TDP2/TTRAP, TANK/ITRAF and TRAF3IP1. Interaction with TNFRSF5/CD40 is modulated by TANK/ITRAF, which competes for the same binding site. Interacts with TICAM1. Interacts with TRAFD1. Interacts with OTUB1, OTUB2 and OTUD5. Interacts with RNF216, OPTN and TBK1. Identified in a complex with TRAF2, MAP3K14 and BIRC3. Upon exposure to bacterial lipopolysaccharide (LPS), recruited to a transient complex containing TLR4, TRAF3, TRAF6, IKBKG, MAP3K7, MYD88, TICAM1, BIRC2, BIRC3 and UBE2N. Interacts (via RING-type zinc finger domain) with SRC. Interacts with CARD14. Interacts (via MATH domain) with PTPN22; the interaction promotes TRAF3 polyubiquitination. Interacts with MAVS. Directly interacts with DDX3X; this interaction stimulates TRAF3 'Lys-63' ubiquitination. Interacts with IRF3. Interacts with IKBKE in the course of viral infection. Interacts with TRIM35. Interacts with GAPDH; promoting TRAF3 ubiquitination. Interacts with PPP3CA and PPP3CB. Interacts with RALGDS. Interacts with FBXO11. In terms of processing, undergoes 'Lys-48'-linked polyubiquitination, leading to its proteasomal degradation in response to signaling by TNFSF13B, TLR4 or through CD40. 'Lys-48'-linked polyubiquitinated form is deubiquitinated by OTUD7B, preventing TRAF3 proteolysis and over-activation of non-canonical NF-kappa-B. Undergoes 'Lys-63'-linked ubiquitination during early stages of virus infection, and 'Lys-48'-linked ubiquitination during later stages. Undergoes both 'Lys-48'-linked and 'Lys-63'-linked ubiquitination in response to TLR3 and TLR4 signaling. 'Lys-63'-linked ubiquitination can be mediated by TRIM35. Deubiquitinated by OTUB1, OTUB2 and OTUD5. Undergoes 'Lys-63'-linked deubiquitination by MYSM1 to terminate the pattern-recognition receptors/PRRs pathways. Ubiquitinated at Lys-328 by the SCF(FBXL2) complex, leading to its degradation by the proteasome. Undergoes 'Lys-48'-linked polyubiquitination, leading to its proteasomal degradation in response to signaling by TNFSF13B, TLR4 or through CD40. 'Lys-48'-linked polyubiquitinated form is deubiquitinated by OTUD7B, preventing TRAF3 proteolysis and over-activation of non-canonical NF-kappa-B. Undergoes 'Lys-63'-linked ubiquitination during early stages of virus infection, and 'Lys-48'-linked ubiquitination during later stages. Undergoes both 'Lys-48'-linked and 'Lys-63'-linked ubiquitination in response to TLR3 and TLR4 signaling. 'Lys-63'-linked ubiquitination can be mediated by TRIM35. Deubiquitinated by OTUB1, OTUB2 and OTUD5. Undergoes 'Lys-63'-linked deubiquitination by MYSM1 to terminate the pattern-recognition receptors/PRRs pathways. Also undergoes 'Lys-29'-linked ubiquitination on Cys-55 and Cys-123 by NEDD4L; leading to increased 'Lys-48'- and 'Lys-63'-linked ubiquitination as well as increased binding to TBK1. TLR4 signals emanating from bacteria containing vesicles trigger 'Lys-33'-linked polyubiquitination that promotes the assembly of the exocyst complex thereby connecting innate immune signaling to the cellular trafficking apparatus. Deubiquitinated by USP25 during viral infection, leading to TRAF3 stabilization and type I interferon production. 'Lys-63'-linked ubiquitination by FBXO11 in a NEDD8-dependent manner promotes the amplification of IFN-I signaling. As to expression, detected in bone marrow macrophages and spleen B-cells (at protein level). In adult, highest in brain. Also found in kidney, heart, thymus, spleen, lung, muscle, testis and ovary. Not found in liver.

It is found in the cytoplasm. The protein localises to the endosome. Its subcellular location is the mitochondrion. It carries out the reaction S-ubiquitinyl-[E2 ubiquitin-conjugating enzyme]-L-cysteine + [acceptor protein]-L-lysine = [E2 ubiquitin-conjugating enzyme]-L-cysteine + N(6)-ubiquitinyl-[acceptor protein]-L-lysine.. Cytoplasmic E3 ubiquitin ligase that regulates various signaling pathways, such as the NF-kappa-B, mitogen-activated protein kinase (MAPK) and interferon regulatory factor (IRF) pathways, and thus controls a lot of biological processes in both immune and non-immune cell types. In TLR and RLR signaling pathways, acts as an E3 ubiquitin ligase promoting the synthesis of 'Lys-63'-linked polyubiquitin chains on several substrates such as ASC that lead to the activation of the type I interferon response or the inflammasome. Following the activation of certain TLRs such as TLR4, acts as a negative NF-kappa-B regulator, possibly to avoid unregulated inflammatory response, and its degradation via 'Lys-48'-linked polyubiquitination is required for MAPK activation and production of inflammatory cytokines. Alternatively, when TLR4 orchestrates bacterial expulsion, TRAF3 undergoes 'Lys-33'-linked polyubiquitination and subsequently binds to RALGDS, mobilizing the exocyst complex to rapidly expel intracellular bacteria back for clearance. Also acts as a constitutive negative regulator of the alternative NF-kappa-B pathway, which controls B-cell survival and lymphoid organ development. Required for normal antibody isotype switching from IgM to IgG. Plays a role T-cell dependent immune responses. Down-regulates proteolytic processing of NFKB2, and thereby inhibits non-canonical activation of NF-kappa-B. Promotes ubiquitination and proteasomal degradation of MAP3K14. The chain is TNF receptor-associated factor 3 from Mus musculus (Mouse).